The primary structure comprises 308 residues: GTPase IMAP family member 5 (308 aa).

Topologically, residues 1–283 (MEHLQKSTYG…VKSCWSSHTA (283 aa)) are cytoplasmic. The AIG1-type G domain occupies 24–227 (SSCLRILLVG…HSNDLFLHAE (204 aa)). GTP contacts are provided by residues 33–41 (GKSGCGKSA), Ser54, 151–153 (RKE), and Asn188. Residues 284 to 304 (ACALLIVLGLTLLTTFINLCI) traverse the membrane as a helical; Anchor for type IV membrane protein segment. Topologically, residues 305 to 308 (SRCK) are mitochondrial intermembrane.

This sequence belongs to the TRAFAC class TrmE-Era-EngA-EngB-Septin-like GTPase superfamily. AIG1/Toc34/Toc159-like paraseptin GTPase family. IAN subfamily. In terms of assembly, interacts with BAD, BAK1, BAX, BCL2, BCL2L1/Bcl-xL and BCL2L11/BimEL. The interaction with BAX is increased, when cells initiate apoptosis upon IL2 withdrawal. Forms a complex with BCL2L1 or MCL1 and HSPA8/HSC70; the interaction between HSPA8 and BCL2L1 or MCL1 is impaired in the absence of GIMAP5. May interact (via N-terminus) with microtubules. In terms of tissue distribution, expressed in thymus (in thymocytes), spleen (in splenocytes), lymph node and lung. Highly expressed in T lymphocytes. Expressed in B cells and in distinct lineages of hematopoietic bone marrow cells, including natural killer, B, T, myeloid and erythroid lineages. Expressed in liver endothelial cells.

It localises to the lysosome. Its subcellular location is the lysosome membrane. It is found in the endosome. The protein localises to the multivesicular body membrane. The protein resides in the endosome membrane. In terms of biological role, plays a role in T lymphocyte development and the optimal generation of CD4/CD8 double-positive thymocytes. Inhibitor of GSK3A. May act by sequestering GSK3A in cytoplasmic vesicles and impairing its translocation to the nucleus. Consequently, impairs GSK3A-dependent transcriptional program and regulation of the DNA damage response occurring during T cells proliferation. Required for the survival of bone marrow hematopoietic stem cells, as well as of peripheral T cells, natural killer (NK) and NK T-cell development and the maintenance of normal liver function. May promote the survival of mature T lymphocytes upon cytokine withdrawal. May regulate Ca(2+) homeostasis by modulating lysosomal Ca(2+) stores, preventing its accumulation in the absence of T cell activation. May play a role in mitochondrial DNA segregation in hematopoietic tissues. Is a regulator of liver endothelial cell homeostasis. In Mus musculus (Mouse), this protein is GTPase IMAP family member 5 (Gimap5).